A 337-amino-acid chain; its full sequence is UDP-N-acetylenolpyruvoylglucosamine reductase (337 aa).

Residues 16–187 (ALPGRAARYQ…TSVIFRLAKA (172 aa)) enclose the FAD-binding PCMH-type domain. Arg160 is a catalytic residue. Ser237 serves as the catalytic Proton donor. Glu333 is an active-site residue.

FAD serves as cofactor.

The protein resides in the cytoplasm. The enzyme catalyses UDP-N-acetyl-alpha-D-muramate + NADP(+) = UDP-N-acetyl-3-O-(1-carboxyvinyl)-alpha-D-glucosamine + NADPH + H(+). Its pathway is cell wall biogenesis; peptidoglycan biosynthesis. Its function is as follows. Cell wall formation. This Dechloromonas aromatica (strain RCB) protein is UDP-N-acetylenolpyruvoylglucosamine reductase.